Consider the following 525-residue polypeptide: Ankyrin repeat and SOCS box protein 3 (525 aa).

ANK repeat units follow at residues 9–38 (DTCS…SIDV), 42–71 (RGWM…SENY), 78–107 (EGFC…DPNA), 111–140 (EETT…NVNG), 145–174 (CGWN…NKEC), 178–207 (FGIT…DVNC), 211–240 (DKAT…DPDL), 246–275 (NWQL…RVCD), 279–308 (NKVS…SPDA), 315–346 (GFSS…QLNE), and 348–373 (HLAY…PSTP). Residues 441-505 (MLSARASNSS…HDYLLYAEVL (65 aa)) enclose the SOCS box domain.

It belongs to the ankyrin SOCS box (ASB) family. Interacts with ELOB and TNFRSF1B.

The protein operates within protein modification; protein ubiquitination. Probable substrate-recognition component of a SCF-like ECS (Elongin-Cullin-SOCS-box protein) E3 ubiquitin-protein ligase complex which mediates the ubiquitination and subsequent proteasomal degradation of target proteins. Recognizes TNFRSF1B. This Bos taurus (Bovine) protein is Ankyrin repeat and SOCS box protein 3 (ASB3).